A 637-amino-acid polypeptide reads, in one-letter code: Chaperone protein DnaK (637 aa).

Position 203 is a phosphothreonine; by autocatalysis (Thr-203). The disordered stretch occupies residues 600–637 (SAVYGQQQEQGAPAQEEPSAEGKKNDDEGTVEGEFREV). The span at 604-616 (GQQQEQGAPAQEE) shows a compositional bias: low complexity. Positions 619–637 (AEGKKNDDEGTVEGEFREV) are enriched in basic and acidic residues.

This sequence belongs to the heat shock protein 70 family.

In terms of biological role, acts as a chaperone. In Dehalococcoides mccartyi (strain ATCC BAA-2266 / KCTC 15142 / 195) (Dehalococcoides ethenogenes (strain 195)), this protein is Chaperone protein DnaK.